Here is a 160-residue protein sequence, read N- to C-terminus: Non-secretory ribonuclease (160 aa).

The N-terminal stretch at 1–27 is a signal peptide; that stretch reads MVPKLFTSPICLLLLLGLMGVEGSLHA. W34 carries C-linked (Man) tryptophan glycosylation. The active-site Proton acceptor is the H42. An N-linked (GlcNAc...) asparagine glycan is attached at N44. 4 disulfides stabilise this stretch: C50–C110, C64–C122, C82–C137, and C89–C98. A 3'-nitrotyrosine modification is found at Y60. A substrate-binding site is contributed by 65 to 69; it reads KNQNT. N-linked (GlcNAc...) asparagine glycans are attached at residues N92, N111, N118, and N138. The active-site Proton donor is the H155.

Belongs to the pancreatic ribonuclease family. As to quaternary structure, interacts with and forms a tight 1:1 complex with RNH1. Dimerization of two such complexes may occur.

The protein localises to the lysosome. It localises to the cytoplasmic granule. It catalyses the reaction an [RNA] containing cytidine + H2O = an [RNA]-3'-cytidine-3'-phosphate + a 5'-hydroxy-ribonucleotide-3'-[RNA].. The catalysed reaction is an [RNA] containing uridine + H2O = an [RNA]-3'-uridine-3'-phosphate + a 5'-hydroxy-ribonucleotide-3'-[RNA].. In terms of biological role, this is a non-secretory ribonuclease. It is a pyrimidine specific nuclease with a slight preference for U. Cytotoxin and helminthotoxin. Possesses a wide variety of biological activities. This is Non-secretory ribonuclease (RNASE2) from Chlorocebus aethiops (Green monkey).